The primary structure comprises 37 residues: Potassium channel toxin alpha-KTx 1.13 (37 aa).

Gln1 carries the post-translational modification Pyrrolidone carboxylic acid. Disulfide bonds link Cys7–Cys28, Cys13–Cys33, and Cys17–Cys35. The tract at residues Gly26–Cys33 is interaction with Ca(2+)-activated K(+) channels.

This sequence belongs to the short scorpion toxin superfamily. Potassium channel inhibitor family. Alpha-KTx 01 subfamily. As to expression, expressed by the venom gland.

The protein resides in the secreted. Functionally, potent selective inhibitor of high conductance (maxi-K), different medium and small conductance calcium-activated potassium channels (KCa1.1/KCNMA1 and others), as well as a voltage-dependent potassium channel (Kv1.3/KCNA3&gt;Kv1.2/KCNA2&gt;Kv1.6/KCNA3&gt;&gt;Shaker/Sh). It blocks channel activity by a simple bimolecular inhibition process. In terms of biological role, has a pH-specific antimicrobial activity against bacteria (B.subtilis, E.coli and S.aureus) and the fungus C.albicans. The sequence is that of Potassium channel toxin alpha-KTx 1.13 from Leiurus hebraeus (Hebrew deathstalker scorpion).